The following is a 1374-amino-acid chain: DNA-directed RNA polymerase subunit beta (1374 aa).

Belongs to the RNA polymerase beta chain family. In terms of assembly, the RNAP catalytic core consists of 2 alpha, 1 beta, 1 beta' and 1 omega subunit. When a sigma factor is associated with the core the holoenzyme is formed, which can initiate transcription.

It catalyses the reaction RNA(n) + a ribonucleoside 5'-triphosphate = RNA(n+1) + diphosphate. In terms of biological role, DNA-dependent RNA polymerase catalyzes the transcription of DNA into RNA using the four ribonucleoside triphosphates as substrates. This is DNA-directed RNA polymerase subunit beta from Rhodopseudomonas palustris (strain TIE-1).